A 250-amino-acid polypeptide reads, in one-letter code: Ribosomal RNA small subunit methyltransferase J (250 aa).

S-adenosyl-L-methionine is bound by residues 101 to 102, 117 to 118, 153 to 154, and D171; these read RD, ER, and SS.

This sequence belongs to the methyltransferase superfamily. RsmJ family.

Its subcellular location is the cytoplasm. It catalyses the reaction guanosine(1516) in 16S rRNA + S-adenosyl-L-methionine = N(2)-methylguanosine(1516) in 16S rRNA + S-adenosyl-L-homocysteine + H(+). In terms of biological role, specifically methylates the guanosine in position 1516 of 16S rRNA. The sequence is that of Ribosomal RNA small subunit methyltransferase J from Cronobacter sakazakii (strain ATCC BAA-894) (Enterobacter sakazakii).